The primary structure comprises 229 residues: Ribonuclease 3 (229 aa).

One can recognise an RNase III domain in the interval 5 to 127; the sequence is LARLERKLGY…LIGAIYLDAD (123 aa). Glutamate 40 lines the Mg(2+) pocket. Aspartate 44 is an active-site residue. The Mg(2+) site is built by aspartate 113 and glutamate 116. The active site involves glutamate 116. The region spanning 154 to 224 is the DRBM domain; that stretch reads DPKTRLQEFL…AASALIALGV (71 aa).

Belongs to the ribonuclease III family. Homodimer. Requires Mg(2+) as cofactor.

The protein resides in the cytoplasm. It carries out the reaction Endonucleolytic cleavage to 5'-phosphomonoester.. Digests double-stranded RNA. Involved in the processing of primary rRNA transcript to yield the immediate precursors to the large and small rRNAs (23S and 16S). Processes some mRNAs, and tRNAs when they are encoded in the rRNA operon. Processes pre-crRNA and tracrRNA of type II CRISPR loci if present in the organism. The chain is Ribonuclease 3 from Pseudomonas putida (strain GB-1).